The sequence spans 61 residues: Small ribosomal subunit protein uS14 (61 aa).

Positions 24, 27, 40, and 43 each coordinate Zn(2+).

It belongs to the universal ribosomal protein uS14 family. Zinc-binding uS14 subfamily. As to quaternary structure, part of the 30S ribosomal subunit. Contacts proteins S3 and S10. Zn(2+) is required as a cofactor.

Binds 16S rRNA, required for the assembly of 30S particles and may also be responsible for determining the conformation of the 16S rRNA at the A site. The polypeptide is Small ribosomal subunit protein uS14 (Dictyoglomus turgidum (strain DSM 6724 / Z-1310)).